Consider the following 138-residue polypeptide: Cysteine desulfuration protein SufE (138 aa).

Cys51 (cysteine persulfide intermediate) is an active-site residue.

The protein belongs to the SufE family. In terms of assembly, homodimer. Interacts with SufS.

The protein resides in the cytoplasm. It functions in the pathway cofactor biosynthesis; iron-sulfur cluster biosynthesis. Participates in cysteine desulfuration mediated by SufS. Cysteine desulfuration mobilizes sulfur from L-cysteine to yield L-alanine and constitutes an essential step in sulfur metabolism for biosynthesis of a variety of sulfur-containing biomolecules. Functions as a sulfur acceptor for SufS, by mediating the direct transfer of the sulfur atom from the S-sulfanylcysteine of SufS, an intermediate product of cysteine desulfuration process. This is Cysteine desulfuration protein SufE from Cronobacter sakazakii (strain ATCC BAA-894) (Enterobacter sakazakii).